The chain runs to 247 residues: 2,3-bisphosphoglycerate-dependent phosphoglycerate mutase (247 aa).

Substrate-binding positions include Arg-8 to Asn-15, Thr-21 to Gly-22, Arg-60, Glu-87 to Tyr-90, Lys-98, Arg-114 to Arg-115, and Gly-183 to Asn-184. His-9 acts as the Tele-phosphohistidine intermediate in catalysis. Glu-87 acts as the Proton donor/acceptor in catalysis.

Belongs to the phosphoglycerate mutase family. BPG-dependent PGAM subfamily.

The catalysed reaction is (2R)-2-phosphoglycerate = (2R)-3-phosphoglycerate. Its pathway is carbohydrate degradation; glycolysis; pyruvate from D-glyceraldehyde 3-phosphate: step 3/5. Catalyzes the interconversion of 2-phosphoglycerate and 3-phosphoglycerate. The sequence is that of 2,3-bisphosphoglycerate-dependent phosphoglycerate mutase from Chlorobium phaeobacteroides (strain BS1).